A 391-amino-acid chain; its full sequence is Formate-dependent phosphoribosylglycinamide formyltransferase (391 aa).

N(1)-(5-phospho-beta-D-ribosyl)glycinamide-binding positions include 20 to 21 (EL) and E80. ATP is bound by residues R112, K153, 158–163 (SSGKGQ), 193–196 (EGFI), and E201. One can recognise an ATP-grasp domain in the interval 117-306 (RLAAEELGLT…EFALHVRAFT (190 aa)). Positions 265 and 277 each coordinate Mg(2+). N(1)-(5-phospho-beta-D-ribosyl)glycinamide is bound by residues D284, K354, and 361–362 (RR).

The protein belongs to the PurK/PurT family. Homodimer.

It carries out the reaction N(1)-(5-phospho-beta-D-ribosyl)glycinamide + formate + ATP = N(2)-formyl-N(1)-(5-phospho-beta-D-ribosyl)glycinamide + ADP + phosphate + H(+). It functions in the pathway purine metabolism; IMP biosynthesis via de novo pathway; N(2)-formyl-N(1)-(5-phospho-D-ribosyl)glycinamide from N(1)-(5-phospho-D-ribosyl)glycinamide (formate route): step 1/1. Its function is as follows. Involved in the de novo purine biosynthesis. Catalyzes the transfer of formate to 5-phospho-ribosyl-glycinamide (GAR), producing 5-phospho-ribosyl-N-formylglycinamide (FGAR). Formate is provided by PurU via hydrolysis of 10-formyl-tetrahydrofolate. The polypeptide is Formate-dependent phosphoribosylglycinamide formyltransferase (Vibrio vulnificus (strain CMCP6)).